The sequence spans 133 residues: Profilin-2 (133 aa).

A disulfide bridge links Cys13 with Cys117. An Involved in PIP2 interaction motif is present at residues 83–99 (AVIRGKKGSGGITIKKT). Phosphothreonine is present on Thr113.

Belongs to the profilin family. As to quaternary structure, occurs in many kinds of cells as a complex with monomeric actin in a 1:1 ratio. In terms of processing, phosphorylated by MAP kinases.

It localises to the cytoplasm. Its subcellular location is the cytoskeleton. In terms of biological role, binds to actin and affects the structure of the cytoskeleton. At high concentrations, profilin prevents the polymerization of actin, whereas it enhances it at low concentrations. This Betula pendula (European white birch) protein is Profilin-2.